Reading from the N-terminus, the 429-residue chain is Histidine--tRNA ligase (429 aa).

It belongs to the class-II aminoacyl-tRNA synthetase family. In terms of assembly, homodimer.

It is found in the cytoplasm. It carries out the reaction tRNA(His) + L-histidine + ATP = L-histidyl-tRNA(His) + AMP + diphosphate + H(+). This chain is Histidine--tRNA ligase, found in Pseudomonas aeruginosa (strain UCBPP-PA14).